The chain runs to 178 residues: Large ribosomal subunit protein uL5 (178 aa).

This sequence belongs to the universal ribosomal protein uL5 family. Part of the 50S ribosomal subunit; part of the 5S rRNA/L5/L18/L25 subcomplex. Contacts the 5S rRNA and the P site tRNA. Forms a bridge to the 30S subunit in the 70S ribosome.

Functionally, this is one of the proteins that bind and probably mediate the attachment of the 5S RNA into the large ribosomal subunit, where it forms part of the central protuberance. In the 70S ribosome it contacts protein S13 of the 30S subunit (bridge B1b), connecting the 2 subunits; this bridge is implicated in subunit movement. Contacts the P site tRNA; the 5S rRNA and some of its associated proteins might help stabilize positioning of ribosome-bound tRNAs. This is Large ribosomal subunit protein uL5 from Acinetobacter baumannii (strain AB0057).